A 354-amino-acid chain; its full sequence is C-C chemokine receptor type 5 (354 aa).

Residues M1–A32 lie on the Extracellular side of the membrane. S6 carries O-linked (GalNAc...) serine glycosylation. Y10, Y12, and Y16 each carry sulfotyrosine. Cystine bridges form between C22–C271 and C103–C180. A helical membrane pass occupies residues Q33–C60. Over K61 to Y70 the chain is Cytoplasmic. The helical transmembrane segment at L71–Y91 threads the bilayer. Topologically, residues A92–K104 are extracellular. Residues V105–I126 traverse the membrane as a helical segment. Over D127–T143 the chain is Cytoplasmic. The chain crosses the membrane as a helical span at residues V144–F168. Residues T169–M200 are Extracellular-facing. The helical transmembrane segment at V201–L220 threads the bilayer. Topologically, residues H221–R237 are cytoplasmic. Residues L238–F262 traverse the membrane as a helical segment. Topologically, residues Q263–Q279 are extracellular. A helical membrane pass occupies residues A280–G303. At E304 to L354 the chain is on the cytoplasmic side. S-palmitoyl cysteine attachment occurs at residues C323 and C326. Phosphoserine; by BARK1 is present on residues S338, S339, S344, and S351.

Belongs to the G-protein coupled receptor 1 family. Interacts with PRAF2. Efficient ligand binding to CCL3/MIP-1alpha and CCL4/MIP-1beta requires sulfation, O-glycosylation and sialic acid modifications. Glycosylation on Ser-6 is required for efficient binding of CCL4. Interacts with GRK2. Interacts with ARRB1 and ARRB2. Interacts with CNIH4. Interacts with S100A4; this interaction stimulates T-lymphocyte chemotaxis. Post-translationally, sulfated on at least 2 of the N-terminal tyrosines. Sulfation is required for efficient binding of the chemokines, CCL3 and CCL4. In terms of processing, O-glycosylated, but not N-glycosylated. Ser-6 appears to be the major site. Also sialylated glycans present which contribute to chemokine binding. Palmitoylation in the C-terminal is important for cell surface expression. Post-translationally, phosphorylation on serine residues in the C-terminal is stimulated by binding CC chemokines especially by APO-RANTES.

It localises to the cell membrane. Receptor for a number of inflammatory CC-chemokines including CCL3/MIP-1-alpha, CCL4/MIP-1-beta and RANTES and subsequently transduces a signal by increasing the intracellular calcium ion level. May play a role in the control of granulocytic lineage proliferation or differentiation. Participates in T-lymphocyte migration to the infection site by acting as a chemotactic receptor. The protein is C-C chemokine receptor type 5 (Ccr5) of Mus musculus (Mouse).